A 1433-amino-acid chain; its full sequence is Pleckstrin homology domain-containing family H member 1 (1433 aa).

Positions 40-174 (NIRHLLAERM…QILMLQDKLQ (135 aa)) form a coiled coil. 2 disordered regions span residues 247 to 346 (DKAD…LSPP) and 552 to 634 (SSVP…TSSY). Residues 252-266 (PKSSQDGVDATSTVK) show a composition bias toward polar residues. The segment covering 279–299 (MRDRAMGGASDRDHSSDELNS) has biased composition (basic and acidic residues). Residues 308–318 (SSSSSSSSSSS) are compositionally biased toward low complexity. Pro residues predominate over residues 332-343 (TPTPKSPPPVSL). Positions 557–567 (PDDDSGSEDDS) are enriched in acidic residues. The span at 568–578 (SSLASLHTSTL) shows a compositional bias: low complexity. A compositionally biased stretch (polar residues) spans 597–606 (VSTSSISSES). PH domains are found at residues 643–737 (TLEK…NVLK) and 751–859 (KPTA…VAAG). Positions 896-1050 (FSKEGLRYPL…PSRMEILSIL (155 aa)) constitute a MyTH4 domain. One can recognise an FERM domain in the interval 1061-1392 (FSIPVHFMNN…SYINYWTSSL (332 aa)).

Critical component of the guidance pathway underlying endothelial cell migration and blood vessel patterning. Involved in mediating membrane localization of ephrin proteins, which have been shown to provide guidance cues for endothelial cell migration. The chain is Pleckstrin homology domain-containing family H member 1 (plekhh1) from Danio rerio (Zebrafish).